Reading from the N-terminus, the 309-residue chain is Foldase protein PrsA 2 (309 aa).

The signal sequence occupies residues 1 to 20 (MKYRLIGVGASLVVAVMLTG). Residue C21 is the site of N-palmitoyl cysteine attachment. Residue C21 is the site of S-diacylglycerol cysteine attachment. The PpiC domain maps to 137–232 (MPMTTVQHIA…TADTKDKPTY (96 aa)).

Belongs to the PrsA family.

The protein resides in the cell membrane. The catalysed reaction is [protein]-peptidylproline (omega=180) = [protein]-peptidylproline (omega=0). Its function is as follows. Plays a major role in protein secretion by helping the post-translocational extracellular folding of several secreted proteins. This is Foldase protein PrsA 2 (prsA2) from Lactiplantibacillus plantarum (strain ATCC BAA-793 / NCIMB 8826 / WCFS1) (Lactobacillus plantarum).